A 189-amino-acid polypeptide reads, in one-letter code: Urease accessory protein UreF (189 aa).

Belongs to the UreF family. In terms of assembly, ureD, UreF and UreG form a complex that acts as a GTP-hydrolysis-dependent molecular chaperone, activating the urease apoprotein by helping to assemble the nickel containing metallocenter of UreC. The UreE protein probably delivers the nickel.

It is found in the cytoplasm. Its function is as follows. Required for maturation of urease via the functional incorporation of the urease nickel metallocenter. The protein is Urease accessory protein UreF of Staphylococcus xylosus.